The primary structure comprises 291 residues: E3 ubiquitin-protein ligase MARCHF8 (291 aa).

Residues 22–72 form a disordered region; sequence YRSKTKEKEREEQNEKTLGHFMSHSSNISKAGSPPSASAPAPVSSFSRTSI. Over residues 25–39 the composition is skewed to basic and acidic residues; the sequence is KTKEKEREEQNEKTL. The segment covering 50 to 72 has biased composition (low complexity); it reads SKAGSPPSASAPAPVSSFSRTSI. Residues 72–133 form an RING-CH-type zinc finger; it reads ITPSSQDICR…ELCKYEFIME (62 aa). Residues Cys-80, Cys-83, Cys-97, Cys-99, His-107, Cys-110, Cys-123, and Cys-126 each contribute to the Zn(2+) site. 2 helical membrane passes run 157–177 and 197–217; these read CSVT…YVLI and FWTK…FMYV. Ser-253 bears the Phosphoserine mark.

In terms of assembly, interacts with CD86. In terms of tissue distribution, broadly expressed. Present in immature dendritic cells (at protein level).

The protein resides in the golgi apparatus membrane. It localises to the endoplasmic reticulum membrane. Its subcellular location is the cytoplasmic vesicle membrane. It is found in the lysosome membrane. The protein localises to the early endosome membrane. The catalysed reaction is S-ubiquitinyl-[E2 ubiquitin-conjugating enzyme]-L-cysteine + [acceptor protein]-L-lysine = [E2 ubiquitin-conjugating enzyme]-L-cysteine + N(6)-ubiquitinyl-[acceptor protein]-L-lysine.. The protein operates within protein modification; protein ubiquitination. E3 ubiquitin-protein ligase that plays several important roles in innate immunity and adaptive immunity. Mediates ubiquitination of CD86 and MHC class II proteins, such as HLA-DR alpha and beta, and promotes their subsequent endocytosis and sorting to lysosomes via multivesicular bodies. Possesses a very broad antiviral activity by specifically inactivating different viral fusion proteins. Targets and ubiquitinates cytoplasmic lysine residues of viral envelope glycoproteins with single transmembrane domains leading to their lysosomal degradation. Therefore, shows broad-spectrum inhibition against many viruses including retroviruses, rhabdoviruses, arenaviruses, sarbecoviruses or influenzaviruses. Strongly blocks human immunodeficiency virus type 1 envelope glycoprotein incorporation into virions by down-regulating its cell surface expression. Also blocks ebola virus glycoprotein/GP incorporation via surface down-regulation. Mediates 'Lys-63'-linked polyubiquitination of influenza M2 to target it to lysosome for degradation. Mediates the regulation of constitutive ubiquitination and trafficking of the viral restriction factor BST2 within the endocytic pathway. Plays a role in maintenance of immune tolerance to self by promoting the turnover and proteasomal degradation of PD-L1/CD274 via ubiquitination. Catalyzes the 'Lys-63'-linked polyubiquitylation of cGAS thereby inhibiting its DNA binding ability and impairing its antiviral innate immunity. Negatively regulates IL7-mediated T-cell homeostasis by mediating 'Lys-27'-linked polyubiquitination of IL7R, leading to its lysosomal degradation. In terms of biological role, (Microbial infection) Mediates 'Lys-63'-linked polyubiquitination of hepatitis C virus/HCV protein NS2 which allows its binding to HGS, an ESCRT-0 complex component, and this interaction is essential for HCV envelopment. This Homo sapiens (Human) protein is E3 ubiquitin-protein ligase MARCHF8.